A 268-amino-acid chain; its full sequence is Thiazole synthase (268 aa).

The active-site Schiff-base intermediate with DXP is Lys-96. Residues Gly-157, Ala-185–Gly-186, and Asn-207–Thr-208 each bind 1-deoxy-D-xylulose 5-phosphate. The disordered stretch occupies residues Pro-238–Gln-268. Over residues Pro-258–Gln-268 the composition is skewed to pro residues.

This sequence belongs to the ThiG family. As to quaternary structure, homotetramer. Forms heterodimers with either ThiH or ThiS.

It is found in the cytoplasm. The catalysed reaction is [ThiS sulfur-carrier protein]-C-terminal-Gly-aminoethanethioate + 2-iminoacetate + 1-deoxy-D-xylulose 5-phosphate = [ThiS sulfur-carrier protein]-C-terminal Gly-Gly + 2-[(2R,5Z)-2-carboxy-4-methylthiazol-5(2H)-ylidene]ethyl phosphate + 2 H2O + H(+). It participates in cofactor biosynthesis; thiamine diphosphate biosynthesis. Its function is as follows. Catalyzes the rearrangement of 1-deoxy-D-xylulose 5-phosphate (DXP) to produce the thiazole phosphate moiety of thiamine. Sulfur is provided by the thiocarboxylate moiety of the carrier protein ThiS. In vitro, sulfur can be provided by H(2)S. The chain is Thiazole synthase from Thermus thermophilus (strain ATCC 27634 / DSM 579 / HB8).